The chain runs to 117 residues: Large ribosomal subunit protein bL19 (117 aa).

It belongs to the bacterial ribosomal protein bL19 family.

Functionally, this protein is located at the 30S-50S ribosomal subunit interface and may play a role in the structure and function of the aminoacyl-tRNA binding site. The sequence is that of Large ribosomal subunit protein bL19 from Vibrio vulnificus (strain CMCP6).